We begin with the raw amino-acid sequence, 91 residues long: Small ribosomal subunit protein uS19 (91 aa).

The protein belongs to the universal ribosomal protein uS19 family.

In terms of biological role, protein S19 forms a complex with S13 that binds strongly to the 16S ribosomal RNA. In Lactobacillus delbrueckii subsp. bulgaricus (strain ATCC 11842 / DSM 20081 / BCRC 10696 / JCM 1002 / NBRC 13953 / NCIMB 11778 / NCTC 12712 / WDCM 00102 / Lb 14), this protein is Small ribosomal subunit protein uS19.